Here is a 798-residue protein sequence, read N- to C-terminus: Cold shock domain-containing protein E1 (798 aa).

One can recognise a CSD 1 domain in the interval 26 to 87 (ETGVIEKLLT…RTGKPIAIKL (62 aa)). Lys81 is modified (N6-acetyllysine). Lys91 is covalently cross-linked (Glycyl lysine isopeptide (Lys-Gly) (interchain with G-Cter in SUMO2)). At Ser123 the chain carries Phosphoserine. In terms of domain architecture, CSD 2; truncated spans 136 to 179 (VFYLTYTSEDVEGNVQLETGDKINFVIDNNKHTGAVSARNIMLL). Residues 186 to 245 (CQGVVCAMKEAFGFIERGDVVKEIFFHYSEFKGDLETLQPGDDVEFTIKDRNGKEVATDV) form the CSD 3 domain. Ser276 is subject to Phosphoserine. One can recognise a CSD 4; truncated domain in the interval 297–337 (LPFGDKDTKSKVTLLEGDHVRFNISTDRRDKLERATNIEVL). CSD domains are found at residues 349 to 410 (EMGV…AIRI) and 447 to 507 (NKGK…ATCV). Ser514 is modified (phosphoserine). The region spanning 519-579 (LLGYVATLKD…KGNKVSAEKV (61 aa)) is the CSD 7 domain. The residue at position 584 (Ser584) is a Phosphoserine. 2 CSD domains span residues 610-670 (PTQI…AYNI) and 674-735 (RRAT…ACNV). The region spanning 748-789 (PRPDRLVNRLKNITLDDASAPRLMVLRQPRGPDNSMGFGAER) is the SUZ-C domain. Thr761 bears the Phosphothreonine mark.

The protein belongs to the UNR family. As to quaternary structure, component of a multi subunit autoregulatory ribonucleoprotein complex (ARC), at least composed of IGF2BP1, PABPC1 and CSDE1. Interacts with STRAP. Part of a complex associated with the FOS mCRD domain and consisting of PABPC1, PAIP1, HNRPD and SYNCRIP. The interaction with PABPC1 is direct and RNA-independent. Interacts with EIF4ENIF1/4E-T.

Its subcellular location is the cytoplasm. It is found in the stress granule. It localises to the P-body. In terms of biological role, RNA-binding protein involved in translationally coupled mRNA turnover. Implicated with other RNA-binding proteins in the cytoplasmic deadenylation/translational and decay interplay of the FOS mRNA mediated by the major coding-region determinant of instability (mCRD) domain. Required for efficient formation of stress granules. This is Cold shock domain-containing protein E1 from Mus musculus (Mouse).